The sequence spans 186 residues: Probable GTP-binding protein EngB (186 aa).

Residues Asp-18 to Leu-186 enclose the EngB-type G domain. GTP-binding positions include Gly-26–Ser-33, Gly-52–Leu-56, Asp-69–Gly-72, Asn-135–Asp-138, and Val-166–Ala-168. The Mg(2+) site is built by Ser-33 and Thr-54.

This sequence belongs to the TRAFAC class TrmE-Era-EngA-EngB-Septin-like GTPase superfamily. EngB GTPase family. Requires Mg(2+) as cofactor.

Its function is as follows. Necessary for normal cell division and for the maintenance of normal septation. This chain is Probable GTP-binding protein EngB, found in Malacoplasma penetrans (strain HF-2) (Mycoplasma penetrans).